Consider the following 152-residue polypeptide: Large ribosomal subunit protein uL15 (152 aa).

A compositionally biased stretch (polar residues) spans 1-12 (MTSTLNTLKSNT). Positions 1-57 (MTSTLNTLKSNTGSRKKKLRKGRGIAAGQGASCGFGMRGQKSRSGRPTRPGFEGGQM) are disordered. Residues 14 to 23 (SRKKKLRKGR) show a composition bias toward basic residues. Residues 25–37 (IAAGQGASCGFGM) are compositionally biased toward gly residues.

It belongs to the universal ribosomal protein uL15 family. In terms of assembly, part of the 50S ribosomal subunit.

Its function is as follows. Binds to the 23S rRNA. This chain is Large ribosomal subunit protein uL15, found in Prochlorococcus marinus subsp. pastoris (strain CCMP1986 / NIES-2087 / MED4).